The chain runs to 71 residues: Pro-glucagon (71 aa).

It belongs to the glucagon family.

Its subcellular location is the secreted. Plays a key role in glucose metabolism and homeostasis. Regulates blood glucose by increasing gluconeogenesis and decreasing glycolysis. The sequence is that of Pro-glucagon (gcg) from Ictalurus punctatus (Channel catfish).